A 245-amino-acid polypeptide reads, in one-letter code: Keratin-associated protein 10-12 (245 aa).

19 tandem repeats follow at residues 36-40 (CCEPP), 41-45 (CCAPA), 62-66 (CCRVT), 84-88 (CCQQS), 94-98 (CCTSS), 104-108 (CCVPV), 109-113 (CCKTV), 114-118 (CCKPV), 119-123 (CCMPV), 124-128 (CCGPS), 131-135 (CCQQS), 141-145 (CCISS), 151-155 (CCVPV), 156-160 (CCKPI), 161-165 (CCVPV), 173-177 (CCQQS), 183-187 (CCTTS), 188-192 (CCRPS), and 214-218 (CCVPT). Positions 36 to 218 (CCEPPCCAPA…VPVPSCCVPT (183 aa)) are 19 X 5 AA repeats of C-C-X(3).

The protein belongs to the KRTAP type 10 family. As to quaternary structure, interacts with hair keratins. As to expression, restricted to a narrow region of the hair fiber cuticle, lying approximately 20 cell layers above the apex of the dermal papilla of the hair root; not detected in any other tissues.

Functionally, in the hair cortex, hair keratin intermediate filaments are embedded in an interfilamentous matrix, consisting of hair keratin-associated proteins (KRTAP), which are essential for the formation of a rigid and resistant hair shaft through their extensive disulfide bond cross-linking with abundant cysteine residues of hair keratins. The matrix proteins include the high-sulfur and high-glycine-tyrosine keratins. The polypeptide is Keratin-associated protein 10-12 (KRTAP10-12) (Homo sapiens (Human)).